Consider the following 98-residue polypeptide: NADH-ubiquinone oxidoreductase chain 4L (98 aa).

A run of 3 helical transmembrane segments spans residues 1–21 (MSMV…GLLM), 29–49 (SLLC…ITIM), and 61–81 (IILL…LVMI).

The protein belongs to the complex I subunit 4L family. As to quaternary structure, core subunit of respiratory chain NADH dehydrogenase (Complex I) which is composed of 45 different subunits.

It is found in the mitochondrion inner membrane. It carries out the reaction a ubiquinone + NADH + 5 H(+)(in) = a ubiquinol + NAD(+) + 4 H(+)(out). In terms of biological role, core subunit of the mitochondrial membrane respiratory chain NADH dehydrogenase (Complex I) which catalyzes electron transfer from NADH through the respiratory chain, using ubiquinone as an electron acceptor. Part of the enzyme membrane arm which is embedded in the lipid bilayer and involved in proton translocation. This Procyon lotor (Raccoon) protein is NADH-ubiquinone oxidoreductase chain 4L (MT-ND4L).